The chain runs to 171 residues: uncharacterized protein (171 aa).

Disordered regions lie at residues 68-124 and 140-171; these read NKNN…ASQQ and GDED…SIKN. Residues 141–160 show a composition bias toward basic and acidic residues; it reads DEDKGMDSTLKLPERTKRDS.

It belongs to the asfivirus H171R family.

The protein localises to the virion. This is an uncharacterized protein from Ornithodoros (relapsing fever ticks).